A 241-amino-acid chain; its full sequence is Zinc finger CCHC domain-containing protein 24 (241 aa).

Phosphoserine occurs at positions 65 and 93. Residues 132 to 149 (YLCHLCFNKGHYIKDCPQ) form a CCHC-type zinc finger.

This Macaca fascicularis (Crab-eating macaque) protein is Zinc finger CCHC domain-containing protein 24 (ZCCHC24).